Consider the following 270-residue polypeptide: Transmembrane protein 176B (270 aa).

The next 4 membrane-spanning stretches (helical) occupy residues 65–85, 95–115, 127–147, and 209–229; these read LALG…GVCL, ASGC…GAIV, VSSL…VLCV, and LFLA…GVGL. 4 positions are modified to phosphoserine: Ser236, Ser245, Ser254, and Ser258. Positions 237–270 are disordered; that stretch reads SQPLNEEGSEKRLLGENSVPPSPSREQTSTAIVL. The segment covering 260–270 has biased composition (polar residues); sequence SREQTSTAIVL.

The protein belongs to the TMEM176 family.

It localises to the nucleus membrane. May play a role in the process of maturation of dendritic cells. Required for the development of cerebellar granule cells. The chain is Transmembrane protein 176B (TMEM176B) from Pongo abelii (Sumatran orangutan).